The sequence spans 293 residues: N(1)-aminopropylagmatine ureohydrolase (293 aa).

Mn(2+)-binding residues include histidine 105, aspartate 128, histidine 130, aspartate 132, aspartate 210, and aspartate 212.

Belongs to the arginase family. It depends on Mn(2+) as a cofactor.

The enzyme catalyses N(1)-(3-aminopropyl)agmatine + H2O = urea + spermidine. It participates in amine and polyamine biosynthesis; spermidine biosynthesis. Functionally, involved in the biosynthesis of polyamines which are thought to support the growth of thermophilic microorganisms under high-temperature conditions. It seems that long-chain and branched-chain of polyamines effectively stabilize DNA and RNA, respectively. Catalyzes the decarboxylation of N1-(3-aminopropyl)agmatine to yield spermidine and urea. Does not act on agmatine. The polypeptide is N(1)-aminopropylagmatine ureohydrolase (Thermus thermophilus (strain ATCC BAA-163 / DSM 7039 / HB27)).